We begin with the raw amino-acid sequence, 131 residues long: Secreted RxLR effector protein 45 (131 aa).

A signal peptide spans 1 to 16 (MSIFIFISLVLGLAHQ). The short motif at 56 to 59 (RPLR) is the RxLR element. A glycan (N-linked (GlcNAc...) asparagine) is linked at Asn128.

The protein belongs to the RxLR effector family.

The protein localises to the secreted. Its subcellular location is the host nucleus. In terms of biological role, secreted effector that completely suppresses the host cell death induced by cell death-inducing proteins. This Plasmopara viticola (Downy mildew of grapevine) protein is Secreted RxLR effector protein 45.